Consider the following 479-residue polypeptide: Glutamyl-tRNA(Gln) amidotransferase subunit A (479 aa).

Residues Lys-75 and Ser-150 each act as charge relay system in the active site. The active-site Acyl-ester intermediate is Ser-174.

The protein belongs to the amidase family. GatA subfamily. In terms of assembly, heterotrimer of A, B and C subunits.

The enzyme catalyses L-glutamyl-tRNA(Gln) + L-glutamine + ATP + H2O = L-glutaminyl-tRNA(Gln) + L-glutamate + ADP + phosphate + H(+). Allows the formation of correctly charged Gln-tRNA(Gln) through the transamidation of misacylated Glu-tRNA(Gln) in organisms which lack glutaminyl-tRNA synthetase. The reaction takes place in the presence of glutamine and ATP through an activated gamma-phospho-Glu-tRNA(Gln). The chain is Glutamyl-tRNA(Gln) amidotransferase subunit A from Synechococcus elongatus (strain ATCC 33912 / PCC 7942 / FACHB-805) (Anacystis nidulans R2).